Consider the following 261-residue polypeptide: Chanoclavine-I dehydrogenase easD (261 aa).

Positions 18, 48, 66, 132, 166, 170, and 201 each coordinate NADP(+). The active-site Proton donor is the Tyr-166. The active-site Lowers pKa of active site Tyr is the Lys-170.

The protein belongs to the short-chain dehydrogenases/reductases (SDR) family.

It catalyses the reaction chanoclavine-I + NAD(+) = chanoclavine-I aldehyde + NADH + H(+). Its pathway is alkaloid biosynthesis; ergot alkaloid biosynthesis. Its function is as follows. Chanoclavine-I dehydrogenase; part of the gene cluster that mediates the biosynthesis of fumiclavanine C, a fungal ergot alkaloid. DmaW catalyzes the first step of ergot alkaloid biosynthesis by condensing dimethylallyl diphosphate (DMAP) and tryptophan to form 4-dimethylallyl-L-tryptophan. The second step is catalyzed by the methyltransferase easF that methylates 4-dimethylallyl-L-tryptophan in the presence of S-adenosyl-L-methionine, resulting in the formation of 4-dimethylallyl-L-abrine. The catalase easC and the FAD-dependent oxidoreductase easE then transform 4-dimethylallyl-L-abrine to chanoclavine-I which is further oxidized by EasD in the presence of NAD(+), resulting in the formation of chanoclavine-I aldehyde. EasA reduces chanoclavine-I aldehyde to dihydrochanoclavine-I aldehyde that spontaneously dehydrates to form 6,8-dimethyl-6,7-didehydroergoline. EasG then catalyzes the reduction of 6,8-dimethyl-6,7-didehydroergoline to form festuclavine. Hydrolysis of festuclavine by easM then leads to the formation of fumigaclavine B which is in turn acetylated by easN to fumigaclavine A. Finally, easL catalyzes the conversion of fumigaclavine A into fumigaclavine C by attaching a dimethylallyl moiety to C-2 of the indole nucleus. This chain is Chanoclavine-I dehydrogenase easD, found in Aspergillus fumigatus (strain ATCC MYA-4609 / CBS 101355 / FGSC A1100 / Af293) (Neosartorya fumigata).